Consider the following 503-residue polypeptide: Long-chain-aldehyde dehydrogenase (503 aa).

218-224 is a binding site for NAD(+); that stretch reads GYGAEVG. Catalysis depends on residues Glu262 and Cys301.

The protein belongs to the aldehyde dehydrogenase family. Homotetramer.

It catalyses the reaction a long-chain fatty aldehyde + NAD(+) + H2O = a long-chain fatty acid + NADH + 2 H(+). Its activity is regulated as follows. Completely inhibited by p-chloromercuribenzoate and N-ethylmaleimide. Strongly inhibited by iodoacetate. Inhibited by Pb(2+), Fe(3+), Ag(+) and Hg(2+) and partially inhibited by several other metal ions Mn(2+), Zn(2+) and Cu(2+). Its function is as follows. Aldehyde dehydrogenase that shows activity toward n-alkanals (C(4) to C(14)), with a preference for longer carbon chains. The best substrate is tetradecanal. This chain is Long-chain-aldehyde dehydrogenase (ald1), found in Acinetobacter sp.